The primary structure comprises 301 residues: MRIIFMGTPDFSVPVLDALVAAEHEVVAVYSQPPRPAGRGKRDRPSPVQARAETLGLTVRNPVSLKSTEEQSALADLNADVAVVVAYGLILPQAVLDAPARGCLNIHASLLPRWRGAAPIHRAIMAGDTMTGVCIMQMEAGLDTGPVLLRRETSIGAEDTTGTLHDRLSAIGAKAIVDALSQLDELTPKPQPDDGVTYATKIDKSEAKVDWTAPAPHINRQILGLSPFPGAWTMAGGKRLKLLQSRVANGTGALGEVLHGLTVACGDGAVEISRVQPEGKGAMDAKDWLLGARIAPGTVLE.

(6S)-5,6,7,8-tetrahydrofolate is bound at residue 109–112 (SLLP).

This sequence belongs to the Fmt family.

It catalyses the reaction L-methionyl-tRNA(fMet) + (6R)-10-formyltetrahydrofolate = N-formyl-L-methionyl-tRNA(fMet) + (6S)-5,6,7,8-tetrahydrofolate + H(+). Functionally, attaches a formyl group to the free amino group of methionyl-tRNA(fMet). The formyl group appears to play a dual role in the initiator identity of N-formylmethionyl-tRNA by promoting its recognition by IF2 and preventing the misappropriation of this tRNA by the elongation apparatus. The polypeptide is Methionyl-tRNA formyltransferase (Jannaschia sp. (strain CCS1)).